The sequence spans 284 residues: Asialoglycoprotein receptor 1 (284 aa).

Residues 1–39 lie on the Cytoplasmic side of the membrane; sequence MTKDYQDFQHLDNENDHHQLQRGPPPAPRLLQRLCSGFR. Residues 5–8 carry the Endocytosis signal motif; it reads YQDF. A lipid anchor (S-palmitoyl cysteine) is attached at cysteine 35. Residues 40–60 traverse the membrane as a helical; Signal-anchor for type II membrane protein segment; the sequence is LFLLSLGLSILLLVVVCVITS. Residues 58-122 are a coiled coil; that stretch reads ITSQNSQLRE…EDLREDHSRL (65 aa). The Extracellular portion of the chain corresponds to 61–284; the sequence is QNSQLREDLR…VCETELGKAN (224 aa). 3 N-linked (GlcNAc...) asparagine glycosylation sites follow: asparagine 75, asparagine 78, and asparagine 146. Intrachain disulfides connect cysteine 153/cysteine 164, cysteine 181/cysteine 276, and cysteine 254/cysteine 268. The C-type lectin domain occupies 160 to 277; that stretch reads YEGSCYWFSS…CRRPYRWVCE (118 aa). Ca(2+) is bound by residues valine 190, glutamate 196, aspartate 215, glutamine 239, aspartate 241, aspartate 242, glutamate 252, aspartate 253, asparagine 264, aspartate 265, and glutamate 277.

Interacts with LASS2. In terms of processing, phosphorylated on a cytoplasmic Ser residue. In terms of tissue distribution, expressed exclusively in hepatic parenchymal cells.

It is found in the membrane. Functionally, mediates the endocytosis of plasma glycoproteins to which the terminal sialic acid residue on their complex carbohydrate moieties has been removed. The receptor recognizes terminal galactose and N-acetylgalactosamine units. After ligand binding to the receptor, the resulting complex is internalized and transported to a sorting organelle, where receptor and ligand are disassociated. The receptor then returns to the cell membrane surface. The protein is Asialoglycoprotein receptor 1 (Asgr1) of Rattus norvegicus (Rat).